Reading from the N-terminus, the 342-residue chain is Methyltransferase ungE' (342 aa).

The protein belongs to the methyltransferase superfamily.

It functions in the pathway secondary metabolite biosynthesis. Functionally, methyltransferase; part of the gene cluster that mediates the biosynthesis of the unguisins, gamma-aminobutyric acid (GABA)-containing fungal cyclic heptapeptides with the amino acid sequence cyclo-(D-Ala1-D-Val2-L-Leu3-beta-MePhe4-D-Ala5-D-Trp6-GABA7) for unguisin H and cyclo-(D-Ala1-D-Ala2-L-Leu3-beta-MePhe4-D-Ala5-D-Trp6-GABA7) for unguisin I. Within the pathway, the methyltransferase ungE' is probably involved in the synthesis of the (2R,3R)-beta-methylphenylalanine residue incorporated by the module 4 of the nonribosomal peptide synthetase (NRPS) ungA'. The alanine racemase ungC' catalyzes the interconversion of L-alanine and D-alanine, providing the D-alanine which is accepted by the first adenylation domain of ungA'. UngA' is the main enzyme within the cluster which condenses the 7 residues using its respective 7 modules. The terminal condensation domain (Ct) is involved in cyclization with D-alanine and thereby releasing of unguisins H and I. Finally, the hydrolase ungD' catalyzes the hydrolysis between the D-tryptophan and GABA residues of unguisins H and I to produce the corresponding linear peptides. In Aspergillus campestris (strain IBT 28561), this protein is Methyltransferase ungE'.